The primary structure comprises 211 residues: Protein-L-isoaspartate O-methyltransferase (211 aa).

Serine 60 is an active-site residue.

Belongs to the methyltransferase superfamily. L-isoaspartyl/D-aspartyl protein methyltransferase family.

It is found in the cytoplasm. The enzyme catalyses [protein]-L-isoaspartate + S-adenosyl-L-methionine = [protein]-L-isoaspartate alpha-methyl ester + S-adenosyl-L-homocysteine. Catalyzes the methyl esterification of L-isoaspartyl residues in peptides and proteins that result from spontaneous decomposition of normal L-aspartyl and L-asparaginyl residues. It plays a role in the repair and/or degradation of damaged proteins. This is Protein-L-isoaspartate O-methyltransferase from Hahella chejuensis (strain KCTC 2396).